Reading from the N-terminus, the 206-residue chain is Probable nicotinate-nucleotide adenylyltransferase (206 aa).

Belongs to the NadD family.

The catalysed reaction is nicotinate beta-D-ribonucleotide + ATP + H(+) = deamido-NAD(+) + diphosphate. Its pathway is cofactor biosynthesis; NAD(+) biosynthesis; deamido-NAD(+) from nicotinate D-ribonucleotide: step 1/1. Catalyzes the reversible adenylation of nicotinate mononucleotide (NaMN) to nicotinic acid adenine dinucleotide (NaAD). The polypeptide is Probable nicotinate-nucleotide adenylyltransferase (Gloeobacter violaceus (strain ATCC 29082 / PCC 7421)).